Reading from the N-terminus, the 113-residue chain is Ribulose bisphosphate carboxylase small subunit (113 aa).

This sequence belongs to the RuBisCO small chain family. As to quaternary structure, heterohexadecamer of 8 large and 8 small subunits.

The protein resides in the carboxysome. RuBisCO catalyzes two reactions: the carboxylation of D-ribulose 1,5-bisphosphate, the primary event in carbon dioxide fixation, as well as the oxidative fragmentation of the pentose substrate in the photorespiration process. Both reactions occur simultaneously and in competition at the same active site. Although the small subunit is not catalytic it is essential for maximal activity. This Synechococcus sp. (strain WH7803) protein is Ribulose bisphosphate carboxylase small subunit.